The chain runs to 141 residues: Large ribosomal subunit protein uL11 (141 aa).

Belongs to the universal ribosomal protein uL11 family. Part of the ribosomal stalk of the 50S ribosomal subunit. Interacts with L10 and the large rRNA to form the base of the stalk. L10 forms an elongated spine to which L12 dimers bind in a sequential fashion forming a multimeric L10(L12)X complex. In terms of processing, one or more lysine residues are methylated.

In terms of biological role, forms part of the ribosomal stalk which helps the ribosome interact with GTP-bound translation factors. This is Large ribosomal subunit protein uL11 from Streptococcus equi subsp. equi (strain 4047).